Reading from the N-terminus, the 417-residue chain is Chaperone SurA (417 aa).

The N-terminal stretch at 1-12 (MGAALLCSFAHA) is a signal peptide. PpiC domains follow at residues 163-264 (SEEY…KLEE) and 273-372 (RDEV…QVLG).

It is found in the periplasm. It carries out the reaction [protein]-peptidylproline (omega=180) = [protein]-peptidylproline (omega=0). Its function is as follows. Chaperone involved in the correct folding and assembly of outer membrane proteins. Recognizes specific patterns of aromatic residues and the orientation of their side chains, which are found more frequently in integral outer membrane proteins. May act in both early periplasmic and late outer membrane-associated steps of protein maturation. In Pseudomonas aeruginosa (strain ATCC 15692 / DSM 22644 / CIP 104116 / JCM 14847 / LMG 12228 / 1C / PRS 101 / PAO1), this protein is Chaperone SurA.